Reading from the N-terminus, the 308-residue chain is Glutaminase (308 aa).

Residues Ser-66, Asn-117, Glu-161, Asn-168, Tyr-192, Tyr-244, and Val-262 each coordinate substrate.

The protein belongs to the glutaminase family. In terms of assembly, homotetramer.

It carries out the reaction L-glutamine + H2O = L-glutamate + NH4(+). The chain is Glutaminase from Yersinia pestis bv. Antiqua (strain Nepal516).